The primary structure comprises 502 residues: MAINAQEISALIKKQIENFQPNFDVTETGIVTYIGDGIARARGLDNAMSGELLEFENGAYGMAQNLESNDVGIIILGDFSAIREGDVVKRTGKIMEVPVGEALIGRVVNPLGQPVDGLGDIETTGFRPVETPAPGVMQRKSVSEPLQTGLKAIDALVPIGRGQRELIIGDRQTGKTSVAIDAILNQKGQDMICIYVAIGQKESTVRTQVETLRRYGALDYTIVVTASASQPSPLLFIAPYAGVAMAEEFMYQGKHVLIVYDDLSKQAVAYRELSLLLRRPPGREAYPGDVFYLHSRLLERSAKVSDDLGGGSITALPFIETQAGDISAYIATNVISITDGQIFLQENLFNSGIRPAIDAGSSVSRVGGSAQIKAMKKVAGTLRLDLASYRELEAFTQFGSDLDAATQAKLNRGRRTVEILKQPLHKPLPVEKQVVILYALTHGFLDDVPVDDILAFEEALYDYFDVHYNDLFETIRTTKDLPEEAALDAAIKAFKEYSNFKS.

169–176 (GDRQTGKT) contacts ATP.

It belongs to the ATPase alpha/beta chains family. In terms of assembly, F-type ATPases have 2 components, CF(1) - the catalytic core - and CF(0) - the membrane proton channel. CF(1) has five subunits: alpha(3), beta(3), gamma(1), delta(1), epsilon(1). CF(0) has three main subunits: a(1), b(2) and c(9-12). The alpha and beta chains form an alternating ring which encloses part of the gamma chain. CF(1) is attached to CF(0) by a central stalk formed by the gamma and epsilon chains, while a peripheral stalk is formed by the delta and b chains.

The protein resides in the cell membrane. It carries out the reaction ATP + H2O + 4 H(+)(in) = ADP + phosphate + 5 H(+)(out). Functionally, produces ATP from ADP in the presence of a proton gradient across the membrane. The alpha chain is a regulatory subunit. The protein is ATP synthase subunit alpha of Streptococcus pyogenes serotype M18 (strain MGAS8232).